Consider the following 366-residue polypeptide: Peptide chain release factor 2 (366 aa).

Gln-251 carries the post-translational modification N5-methylglutamine.

Belongs to the prokaryotic/mitochondrial release factor family. Methylated by PrmC. Methylation increases the termination efficiency of RF2.

Its subcellular location is the cytoplasm. Peptide chain release factor 2 directs the termination of translation in response to the peptide chain termination codons UGA and UAA. In Bacillus subtilis (strain 168), this protein is Peptide chain release factor 2 (prfB).